A 480-amino-acid polypeptide reads, in one-letter code: GTPase Obg (480 aa).

Positions Thr2–Val159 constitute an Obg domain. Positions Ala160–Ala341 constitute an OBG-type G domain. GTP is bound by residues Gly166–Ser173, Phe191–Ala195, Asp212–Gly215, Asn292–Asp295, and Ser322–Val324. 2 residues coordinate Mg(2+): Ser173 and Thr193. Residues Pro359 to Pro437 form the OCT domain. Residues Ala441–Glu480 form a disordered region. The segment covering Thr452 to Lys468 has biased composition (basic and acidic residues). The segment covering Ala469 to Glu480 has biased composition (basic residues).

The protein belongs to the TRAFAC class OBG-HflX-like GTPase superfamily. OBG GTPase family. As to quaternary structure, monomer. Requires Mg(2+) as cofactor.

It is found in the cytoplasm. Its function is as follows. An essential GTPase which binds GTP, GDP and possibly (p)ppGpp with moderate affinity, with high nucleotide exchange rates and a fairly low GTP hydrolysis rate. Plays a role in control of the cell cycle, stress response, ribosome biogenesis and in those bacteria that undergo differentiation, in morphogenesis control. The protein is GTPase Obg of Mycolicibacterium vanbaalenii (strain DSM 7251 / JCM 13017 / BCRC 16820 / KCTC 9966 / NRRL B-24157 / PYR-1) (Mycobacterium vanbaalenii).